The following is a 253-amino-acid chain: Probable transcriptional regulatory protein Krad_3057 (253 aa).

Belongs to the TACO1 family.

The protein localises to the cytoplasm. In Kineococcus radiotolerans (strain ATCC BAA-149 / DSM 14245 / SRS30216), this protein is Probable transcriptional regulatory protein Krad_3057.